Reading from the N-terminus, the 160-residue chain is Large ribosomal subunit protein uL22c (160 aa).

It belongs to the universal ribosomal protein uL22 family. As to quaternary structure, part of the 50S ribosomal subunit.

It is found in the plastid. It localises to the chloroplast. Functionally, this protein binds specifically to 23S rRNA. In terms of biological role, the globular domain of the protein is located near the polypeptide exit tunnel on the outside of the subunit, while an extended beta-hairpin is found that lines the wall of the exit tunnel in the center of the 70S ribosome. This chain is Large ribosomal subunit protein uL22c (rpl22), found in Olimarabidopsis pumila (Dwarf rocket).